Reading from the N-terminus, the 45-residue chain is Large ribosomal subunit protein bL36 (45 aa).

The protein belongs to the bacterial ribosomal protein bL36 family.

In Psychrobacter sp. (strain PRwf-1), this protein is Large ribosomal subunit protein bL36.